The sequence spans 137 residues: Ig heavy chain V region MOPC 315 (137 aa).

The first 18 residues, 1 to 18 (MKVLSLLYLLTAIPGIMS), serve as a signal peptide directing secretion. Residues 19–48 (DVQLQESGPGLVKPSQSLSLTCSVTGYSIT) form a framework-1 region. Cys-40 and Cys-114 form a disulfide bridge. Residues 49 to 54 (SGYFWN) form a complementarity-determining-1 region. The interval 55 to 68 (WIRQFPGNKLEWLG) is framework-2. Residues 69 to 84 (FIKYDGSNGYNPSLKN) are complementarity-determining-2. Residues 85–116 (RVSITRDTSENQFFLKLNSVTTEDTATYYCAG) are framework-3. The complementarity-determining-3 stretch occupies residues 117–126 (DNDHLYYFDY). Residues 127–137 (WGQGTTLTVSS) form a framework-4 region.

The sequence is that of Ig heavy chain V region MOPC 315 from Mus musculus (Mouse).